Reading from the N-terminus, the 141-residue chain is MRRNQTPEGHSIRPLRVGEQIRHVLAEMLMRGEIHGDTLDNLFVSISEVRMTPDLRIATVFVKSLGGASDDTVIGILSKNASFLQAAIAKKIRLKYVPKLRFLADESFEQGSRIDSLLRSPHVQRDLQENDDQEDDSEGSL.

The tract at residues 120 to 141 is disordered; sequence SPHVQRDLQENDDQEDDSEGSL. Positions 129–141 are enriched in acidic residues; that stretch reads ENDDQEDDSEGSL.

The protein belongs to the RbfA family. Monomer. Binds 30S ribosomal subunits, but not 50S ribosomal subunits or 70S ribosomes.

The protein localises to the cytoplasm. One of several proteins that assist in the late maturation steps of the functional core of the 30S ribosomal subunit. Associates with free 30S ribosomal subunits (but not with 30S subunits that are part of 70S ribosomes or polysomes). Required for efficient processing of 16S rRNA. May interact with the 5'-terminal helix region of 16S rRNA. This Zymomonas mobilis subsp. mobilis (strain ATCC 31821 / ZM4 / CP4) protein is Ribosome-binding factor A.